A 223-amino-acid polypeptide reads, in one-letter code: Pleckstrin homology domain-containing family B member 1 (223 aa).

A PH domain is found at 2 to 109 (ALVRGGWLWR…WKTALMEANS (108 aa)).

In terms of assembly, homodimer. Interacts (via PH domain) with MYO1C. Interacts (via PH domain) with MYO7A. Binds transducins. As to expression, highly expressed in photoreceptor cells, oligodendrocytes and throughout the myelinated parts of the central nervous system. Detected in brain, liver, kidney, spleen and trachea.

It localises to the membrane. The protein localises to the cytoplasm. This is Pleckstrin homology domain-containing family B member 1 (Plekhb1) from Rattus norvegicus (Rat).